The chain runs to 1663 residues: MATDGASCEPDLSRAPEDAAGATAEAAKKEFDVDTLSKSELRMLLSVMEGELEARDLVIEALRARRKEVFIQERYGRFNLNDPFLALQRDYEAGAGDKEKKPVCTNPLSILEAVMAHCRKMQERMSAQLAAAESRQKKLEMEKLQLQALEQEHKKLAARLEEERGKNKQVVLMLVKECKQLSGRVIEEAQKLKDVMAKLEEEKKKTNELEEELSAEKQRSTEMEAQMEKQLSEFDTEREQLRAKLNREEAHTTDLKEEIDKMKKMIEQLKKGGDSKPSLSLPRKTKDRRLVSISVGTEGTVTRSVACQTDLVTESADHVKKLPLTMPVKPSTGSPLASANAKGSVCTSAAMARPSIDRQPSHGDLIGVSVPAFPPSSANRIEENGPSTDSTPDPTSSTPLLSSNAAPPTAQTPGITPQNSQAPPMHSLHSPCANASLHPGLNPRIQAARFRFQGNANDPDQNGNTTQSPPSRDVSPTSRDNLVAKQLARNTVTQALSRFTGPQAGAPPRPGAPPTGDVGTHPSVGRTSVKTHGVARVDRGNPPPIPPKKPGLSQTPSPPHPQLKVIIDSSRASNTGAKGDNKTVASPPSSLPQGNRVINEENLPKSSSPQLPPKPSIDLTVAPAGCAVSALATSQVGAWPAATPGLNQPACSDSSLVIPTTIAFCSSINPVSASSCRPGASDSLLVTASGWSPSLTPLLMSGGPAPLAGRPTLLQQAAAQGNVTLLSMLLNEEGLDINYSCEDGHSALYSAAKNGHTDCVRLLLSAEAQVNAADTNGFTPLCAAAAQGHFECVELLIAYDANINHAAGGGQTPLYLACKNGNKECIKLLLEAGTDRCVKTTDGWTPVHAAVDTGNVDSLKLLMYHRVPAHGNSFSEEESESGVFDLDGEEESPEGKSKPVVTADLINHANREGWTAAHIAAAKGFKNCLEILCRHGGLEPERRDKCNRTVHDVATDDCKHLLENLNALKIPLRISVGEIEPSDYGSDDFECENTICSLNIRKQTSWDDFSKAVNQALTNHFQAISSDGWWSLEDVTCNNTTDSNIGLSARSIRSITLGNVPWSVGESFAQSPWDFMMKNKAEHITVLLSGPQEGCLSSVTYASMIPLQMMQNYLRLVEQYHNVIFHGPEGSLQDYIVHQLALCLKHRQMAAGFSCEIVRAEVDSGFSKKQLLDLFISNACLIPVKQSPVKKKIIIILENLEKSSLSELLRDFLAPLENRSTESPCTFQKGNGMSECYYFHENCFLMGTIAKACLQGSDLLVQQHFRWVQLRWDGEPMQGLLQRFLRRKVVNKFRGQVPPPCDPVCKIVDWALSVWRQLNSCLARLGTPEALLGPKYFLSCPVVPGHAQVTVKWMSKLWNGVITPRVQEAILSRASVKRQPGFGQTTAKRHPSQGQQAVVKAALSILLNKAVLHGCPLPRAELEQHTADFKGGSFPLSIVSSFNSCSKKKGESGAWRKVNTSPRRKSGRFSLPTWNKPDLSTEGIKNKTLSQLNCNRNASLSKQKSVENDVSLTLNLDQRLSLGSDDEADLVKELQSMCSSKSESDISKIADSRDDLRMFNSPGNNPVFSATVNNLRMPVSQKEVCPLSSHQTTECSNSKSKTELGVSRVKSFLPVPRSKVTQCSQNTKSSSSSSNTRQIEINNNSKEENWNLHKNEHLEKANK.

Residues 1–26 (MATDGASCEPDLSRAPEDAAGATAEA) form a disordered region. Residues 119–275 (RKMQERMSAQ…IEQLKKGGDS (157 aa)) are a coiled coil. 2 disordered regions span residues 355–440 (SIDR…LHPG) and 454–478 (GNAN…SPTS). Low complexity predominate over residues 386–403 (PSTDSTPDPTSSTPLLSS). A compositionally biased stretch (polar residues) spans 404 to 422 (NAAPPTAQTPGITPQNSQA). Residue Arg498 is modified to Asymmetric dimethylarginine. Residues 499–614 (FTGPQAGAPP…KSSSPQLPPK (116 aa)) are disordered. Over residues 583–593 (TVASPPSSLPQ) the composition is skewed to polar residues. ANK repeat units lie at residues 709 to 739 (GRPT…DINY), 743 to 772 (DGHS…QVNA), 776 to 805 (NGFT…NINH), 809 to 838 (GGQT…DRCV), and 842 to 871 (DGWT…PAHG). Positions 872–897 (NSFSEEESESGVFDLDGEEESPEGKS) are disordered. Residues 875 to 892 (SEEESESGVFDLDGEEES) show a composition bias toward acidic residues. Residues 912 to 942 (EGWTAAHIAAAKGFKNCLEILCRHGGLEPER) form an ANK 6 repeat. A disordered region spans residues 1446–1482 (SKKKGESGAWRKVNTSPRRKSGRFSLPTWNKPDLSTE). Phosphoserine is present on Ser1524. Residues 1617–1663 (RSKVTQCSQNTKSSSSSSNTRQIEINNNSKEENWNLHKNEHLEKANK) form a disordered region. 2 stretches are compositionally biased toward polar residues: residues 1619 to 1628 (KVTQCSQNTK) and 1635 to 1644 (NTRQIEINNN). Over residues 1645-1663 (SKEENWNLHKNEHLEKANK) the composition is skewed to basic and acidic residues.

As to quaternary structure, interacts with CTTN/cortactin SH3 domain. Interacts with STRN, STRN4/zinedin and MOB4/phocein; this interactions mediate the association with the STRIPAK core complex and may regulate dendritic spine distribution of the STRIPAK complex in hippocampal neurons. Activation of glutamate receptors weakens the interaction with STRN and STRN4.

It is found in the cytoplasm. The protein localises to the cell cortex. Its subcellular location is the cell projection. It localises to the dendritic spine. Its function is as follows. Regulates the dendritic spine distribution of CTTN/cortactin in hippocampal neurons, and thus controls dendritic spinogenesis and dendritic spine maintenance. Associates with the striatin-interacting phosphatase and kinase (STRIPAK) core complex to regulate dendritic spine distribution of the STRIPAK complex in hippocampal neurons. The protein is Cortactin-binding protein 2 (CTTNBP2) of Plecturocebus moloch (Dusky titi monkey).